Reading from the N-terminus, the 449-residue chain is Sensor protein QseC (449 aa).

The Cytoplasmic segment spans residues 1 to 12 (MKLTQRLSLRVR). Residues 13–33 (LTLIFLILVSITWAISSFVAW) form a helical membrane-spanning segment. Over 34–161 (RKTTDNVDEL…REDMALAIVA (128 aa)) the chain is Periplasmic. Residues 162-182 (AQLTPWLIALPFMLLILLLLL) form a helical membrane-spanning segment. The 53-residue stretch at 183-235 (HRELRPLKKLAQALRFRSPESETPLDAKGVPSEVRPLVEALNQLFSRIHSMMV) folds into the HAMP domain. The Cytoplasmic segment spans residues 183 to 449 (HRELRPLKKL…EGGFEAVVSW (267 aa)). Positions 243 to 449 (DAAHELRSPL…EGGFEAVVSW (207 aa)) constitute a Histidine kinase domain. His246 bears the Phosphohistidine; by autocatalysis mark.

The protein resides in the cell inner membrane. It carries out the reaction ATP + protein L-histidine = ADP + protein N-phospho-L-histidine.. Member of a two-component regulatory system QseB/QseC. Activates the flagella regulon by activating transcription of FlhDC. May activate QseB by phosphorylation. The polypeptide is Sensor protein QseC (qseC) (Salmonella typhimurium (strain LT2 / SGSC1412 / ATCC 700720)).